Here is a 196-residue protein sequence, read N- to C-terminus: uncharacterized protein (196 aa).

One can recognise an HD domain in the interval 51–164; it reads VAEHSLLVEE…DRIFGKPDPV (114 aa).

This is an uncharacterized protein from Rhodobacter capsulatus (strain ATCC BAA-309 / NBRC 16581 / SB1003).